The following is an 861-amino-acid chain: ATP-dependent helicase rhp16 (861 aa).

Positions 1 to 13 (MGTSCNKINSNSN) are enriched in polar residues. Residues 1–217 (MGTSCNKINS…KSIPSHERTH (217 aa)) form a disordered region. Basic and acidic residues-rich tracts occupy residues 14-23 (KGKENMHFVL) and 38-57 (VERD…KEFE). Positions 60-82 (LSTNKKLIIQSNNTSSQHSTPPL) are enriched in polar residues. Positions 83-95 (SISDTSTHTGSST) are enriched in low complexity. The span at 96-106 (DNVEANPNTGF) shows a compositional bias: polar residues. The segment covering 109 to 123 (ARKRSLRSSNLKKKF) has biased composition (basic residues). The segment covering 131–145 (ESNESEFIDDDESDE) has biased composition (acidic residues). A compositionally biased stretch (low complexity) spans 193 to 204 (ARASSSASSSSR). The region spanning 268-442 (RQEDSSFGGG…FSLLRFLRAD (175 aa)) is the Helicase ATP-binding domain. Residue 281-288 (DEMGMGKT) participates in ATP binding. Positions 393–396 (DEAH) match the DEAH box motif. The segment at 609 to 652 (CKICDEVAQDAIESRCHHTFCRLCVTEYINAAGDGENVNCPSCF) adopts an RING-type zinc-finger fold. The 154-residue stretch at 695–848 (LVEELYLLRK…TIDQDEKALN (154 aa)) folds into the Helicase C-terminal domain.

This sequence belongs to the SNF2/RAD54 helicase family.

The protein localises to the nucleus. Its function is as follows. Involved in global genome repair (GGR) via nucleotide excision repair (NER), in conjunction with rhp7, after UV irradiation. The polypeptide is ATP-dependent helicase rhp16 (rhp16) (Schizosaccharomyces pombe (strain 972 / ATCC 24843) (Fission yeast)).